Here is a 642-residue protein sequence, read N- to C-terminus: Threonine--tRNA ligase (642 aa).

The region spanning 1 to 61 is the TGS domain; the sequence is MPVITLPDGS…ETDATLSIIT (61 aa). Positions 243–534 are catalytic; it reads DHRKIGKQLD…LTEETAGYFP (292 aa). Zn(2+)-binding residues include Cys334, His385, and His511.

Belongs to the class-II aminoacyl-tRNA synthetase family. In terms of assembly, homodimer. Zn(2+) is required as a cofactor.

It localises to the cytoplasm. The enzyme catalyses tRNA(Thr) + L-threonine + ATP = L-threonyl-tRNA(Thr) + AMP + diphosphate + H(+). Its function is as follows. Catalyzes the attachment of threonine to tRNA(Thr) in a two-step reaction: L-threonine is first activated by ATP to form Thr-AMP and then transferred to the acceptor end of tRNA(Thr). Also edits incorrectly charged L-seryl-tRNA(Thr). The chain is Threonine--tRNA ligase from Tolumonas auensis (strain DSM 9187 / NBRC 110442 / TA 4).